The sequence spans 314 residues: Ribonuclease Z (314 aa).

His-62, His-64, Asp-66, His-67, His-144, Asp-215, and His-273 together coordinate Zn(2+). Catalysis depends on Asp-66, which acts as the Proton acceptor.

The protein belongs to the RNase Z family. As to quaternary structure, homodimer. It depends on Zn(2+) as a cofactor.

It catalyses the reaction Endonucleolytic cleavage of RNA, removing extra 3' nucleotides from tRNA precursor, generating 3' termini of tRNAs. A 3'-hydroxy group is left at the tRNA terminus and a 5'-phosphoryl group is left at the trailer molecule.. Its function is as follows. Zinc phosphodiesterase, which displays some tRNA 3'-processing endonuclease activity. Probably involved in tRNA maturation, by removing a 3'-trailer from precursor tRNA. The protein is Ribonuclease Z of Prochlorococcus marinus (strain NATL1A).